Consider the following 306-residue polypeptide: Homoserine O-acetyltransferase (306 aa).

The active-site Acyl-thioester intermediate is the Cys142. 2 residues coordinate substrate: Lys163 and Ser192. The Proton acceptor role is filled by His235. Glu237 is an active-site residue. Substrate is bound at residue Arg249.

The protein belongs to the MetA family.

It is found in the cytoplasm. The enzyme catalyses L-homoserine + acetyl-CoA = O-acetyl-L-homoserine + CoA. It functions in the pathway amino-acid biosynthesis; L-methionine biosynthesis via de novo pathway; O-acetyl-L-homoserine from L-homoserine: step 1/1. In terms of biological role, transfers an acetyl group from acetyl-CoA to L-homoserine, forming acetyl-L-homoserine. The chain is Homoserine O-acetyltransferase from Brucella melitensis biotype 1 (strain ATCC 23456 / CCUG 17765 / NCTC 10094 / 16M).